Consider the following 497-residue polypeptide: Glycerol kinase (497 aa).

Thr-12 lines the ADP pocket. Residues Thr-12, Thr-13, and Ser-14 each contribute to the ATP site. Thr-12 is a sn-glycerol 3-phosphate binding site. Arg-16 lines the ADP pocket. The sn-glycerol 3-phosphate site is built by Arg-82, Glu-83, Tyr-134, and Asp-243. Glycerol-binding residues include Arg-82, Glu-83, Tyr-134, Asp-243, and Gln-244. ADP contacts are provided by Thr-265 and Gly-308. ATP contacts are provided by Thr-265, Gly-308, Gln-312, and Gly-409. 2 residues coordinate ADP: Gly-409 and Asn-413.

Belongs to the FGGY kinase family. In terms of assembly, homotetramer and homodimer (in equilibrium).

It carries out the reaction glycerol + ATP = sn-glycerol 3-phosphate + ADP + H(+). It participates in polyol metabolism; glycerol degradation via glycerol kinase pathway; sn-glycerol 3-phosphate from glycerol: step 1/1. Activated by phosphorylation and inhibited by fructose 1,6-bisphosphate (FBP). In terms of biological role, key enzyme in the regulation of glycerol uptake and metabolism. Catalyzes the phosphorylation of glycerol to yield sn-glycerol 3-phosphate. This chain is Glycerol kinase, found in Caldanaerobacter subterraneus subsp. tengcongensis (strain DSM 15242 / JCM 11007 / NBRC 100824 / MB4) (Thermoanaerobacter tengcongensis).